Consider the following 213-residue polypeptide: Imidazoleglycerol-phosphate dehydratase (213 aa).

Belongs to the imidazoleglycerol-phosphate dehydratase family.

The protein resides in the cytoplasm. The enzyme catalyses D-erythro-1-(imidazol-4-yl)glycerol 3-phosphate = 3-(imidazol-4-yl)-2-oxopropyl phosphate + H2O. Its pathway is amino-acid biosynthesis; L-histidine biosynthesis; L-histidine from 5-phospho-alpha-D-ribose 1-diphosphate: step 6/9. This chain is Imidazoleglycerol-phosphate dehydratase, found in Trichodesmium erythraeum (strain IMS101).